A 1419-amino-acid chain; its full sequence is Multidrug resistance protein 1 (1419 aa).

Residues Met1 to Asn37 form a r domain; regulates transporter activity region. Topologically, residues Met1–Ser60 are cytoplasmic. Positions Phe58–Lys345 constitute an ABC transmembrane type-1 1 domain. Residues Phe61–Ile81 traverse the membrane as a helical segment. Residues Leu82–Asp90 lie on the Vacuolar side of the membrane. The helical transmembrane segment at Ile91–Ile111 threads the bilayer. Residues Ser112 to Thr168 lie on the Cytoplasmic side of the membrane. A helical transmembrane segment spans residues Lys169 to Ile189. Residues Lys190–Asn191 are Vacuolar-facing. The helical transmembrane segment at Ala192–Cys212 threads the bilayer. Topologically, residues Asn213–Glu275 are cytoplasmic. Residues Ala276–Tyr296 form a helical membrane-spanning segment. Residues Gly297–Gly316 lie on the Vacuolar side of the membrane. Residues Ala317–Leu337 form a helical membrane-spanning segment. At Pro338 to Asp788 the chain is on the cytoplasmic side. The region spanning Ile378–Lys662 is the ABC transporter 1 domain. ATP-binding residues include Tyr387, Thr389, Arg390, Ser415, Cys417, Gly418, Lys419, Ser420, Thr421, Gln462, Lys562, Ser564, Gly566, and Gln567. Residue Gln462 participates in Mg(2+) binding. Disordered stretches follow at residues Glu639–Asn665 and Ser697–Asn752. 2 stretches are compositionally biased toward low complexity: residues Asn643–Asn665 and Ser697–Ser715. Polar residues predominate over residues Gly723–Thr749. A helical membrane pass occupies residues Val789 to Leu809. Positions Ile791–Leu1083 constitute an ABC transmembrane type-1 2 domain. Residues Tyr810–Lys829 lie on the Vacuolar side of the membrane. The helical transmembrane segment at Tyr830–Tyr850 threads the bilayer. Residues Tyr851–Asn907 lie on the Cytoplasmic side of the membrane. The next 2 helical transmembrane spans lie at Ile908 to Phe928 and Cys929 to Val949. Residues Arg950–Gly1032 are Cytoplasmic-facing. The chain crosses the membrane as a helical span at residues Phe1033 to Ile1053. Residues Lys1054–Thr1057 lie on the Vacuolar side of the membrane. Residues Ile1058–Gly1078 form a helical membrane-spanning segment. Residues Lys1079–Lys1419 lie on the Cytoplasmic side of the membrane. The ABC transporter 2 domain maps to Val1126–Lys1416. ATP-binding residues include Tyr1135, Arg1138, Thr1163, Gly1164, Gly1166, Lys1167, Ser1168, Thr1169, Gln1256, Leu1312, Ser1313, Gly1315, and Gln1316. Ser1168 lines the Mg(2+) pocket. Mg(2+) is bound at residue Gln1256.

It belongs to the ABC transporter superfamily. ABCB family. Multidrug resistance exporter (TC 3.A.1.201) subfamily.

The protein localises to the vacuole membrane. The enzyme catalyses ATP + H2O + xenobioticSide 1 = ADP + phosphate + xenobioticSide 2.. Its function is as follows. Energy-dependent efflux pump responsible for decreased drug accumulation in multidrug-resistant cells. Transports lumefantrine, mefloquine, chloroquine, quinine, quinidine, amodiaquine, piperaquine, dihydroartemisinin and quinacrine. The polypeptide is Multidrug resistance protein 1 (Plasmodium falciparum (isolate 3D7)).